A 320-amino-acid polypeptide reads, in one-letter code: Olfactory receptor 2W1 (320 aa).

The Extracellular portion of the chain corresponds to Met-1–Met-25. N-linked (GlcNAc...) asparagine glycosylation occurs at Asn-5. Residues Ile-26 to Ser-49 traverse the membrane as a helical segment. The Cytoplasmic portion of the chain corresponds to Leu-50–Thr-57. A helical transmembrane segment spans residues Pro-58–Pro-79. The Extracellular segment spans residues Gln-80–Gln-100. Residues Cys-97 and Cys-189 are joined by a disulfide bond. Residues Leu-101–Tyr-120 form a helical membrane-spanning segment. Over Asp-121 to His-139 the chain is Cytoplasmic. Residues Leu-140 to Val-158 form a helical membrane-spanning segment. Topologically, residues Leu-159–Val-195 are extracellular. Residues Glu-196–Gly-219 traverse the membrane as a helical segment. Over Tyr-220 to Lys-236 the chain is Cytoplasmic. A helical transmembrane segment spans residues Ala-237 to Tyr-259. Over Leu-260–Lys-272 the chain is Extracellular. A helical transmembrane segment spans residues Phe-273 to Leu-292. The Cytoplasmic segment spans residues Arg-293–Ser-320.

The protein belongs to the G-protein coupled receptor 1 family.

The protein localises to the cell membrane. In terms of biological role, odorant receptor. In Homo sapiens (Human), this protein is Olfactory receptor 2W1 (OR2W1).